The sequence spans 332 residues: Glycerol-3-phosphate dehydrogenase [NAD(P)+] (332 aa).

Residues Ser11, Trp12, Arg32, Arg33, and Lys106 each coordinate NADPH. Positions 106 and 136 each coordinate sn-glycerol 3-phosphate. Residue Ala140 participates in NADPH binding. Residues Lys191, Asp244, Ser254, Arg255, and Asn256 each coordinate sn-glycerol 3-phosphate. Lys191 functions as the Proton acceptor in the catalytic mechanism. Arg255 lines the NADPH pocket. NADPH-binding residues include Val280 and Glu282.

The protein belongs to the NAD-dependent glycerol-3-phosphate dehydrogenase family.

It is found in the cytoplasm. The enzyme catalyses sn-glycerol 3-phosphate + NAD(+) = dihydroxyacetone phosphate + NADH + H(+). It carries out the reaction sn-glycerol 3-phosphate + NADP(+) = dihydroxyacetone phosphate + NADPH + H(+). It participates in membrane lipid metabolism; glycerophospholipid metabolism. Catalyzes the reduction of the glycolytic intermediate dihydroxyacetone phosphate (DHAP) to sn-glycerol 3-phosphate (G3P), the key precursor for phospholipid synthesis. The protein is Glycerol-3-phosphate dehydrogenase [NAD(P)+] of Corynebacterium glutamicum (strain R).